A 316-amino-acid chain; its full sequence is L-lactate dehydrogenase (316 aa).

NAD(+) is bound by residues V15, D37, K42, Y68, and 82–83 (GL). Substrate-binding positions include Q85, R91, and 123–126 (NPVD). Residues 121–123 (ASN) and T146 each bind NAD(+). Position 151–154 (151–154 (DTSR)) interacts with substrate. The beta-D-fructose 1,6-bisphosphate site is built by R156 and H171. Catalysis depends on H178, which acts as the Proton acceptor. Y222 carries the phosphotyrosine modification. T231 contributes to the substrate binding site.

It belongs to the LDH/MDH superfamily. LDH family. Homotetramer.

It localises to the cytoplasm. The catalysed reaction is (S)-lactate + NAD(+) = pyruvate + NADH + H(+). Its pathway is fermentation; pyruvate fermentation to lactate; (S)-lactate from pyruvate: step 1/1. Its activity is regulated as follows. Allosterically activated by fructose 1,6-bisphosphate (FBP). Catalyzes the conversion of lactate to pyruvate. This is L-lactate dehydrogenase from Borrelia turicatae (strain 91E135).